The sequence spans 177 residues: Alkyl hydroperoxide reductase AhpD (177 aa).

Cys-133 functions as the Proton donor in the catalytic mechanism. A disulfide bond links Cys-133 and Cys-136. Catalysis depends on Cys-136, which acts as the Cysteine sulfenic acid (-SOH) intermediate.

This sequence belongs to the AhpD family.

The catalysed reaction is N(6)-[(R)-dihydrolipoyl]-L-lysyl-[lipoyl-carrier protein] + a hydroperoxide = N(6)-[(R)-lipoyl]-L-lysyl-[lipoyl-carrier protein] + an alcohol + H2O. Antioxidant protein with alkyl hydroperoxidase activity. Required for the reduction of the AhpC active site cysteine residues and for the regeneration of the AhpC enzyme activity. This chain is Alkyl hydroperoxide reductase AhpD, found in Coxiella burnetii (strain CbuG_Q212) (Coxiella burnetii (strain Q212)).